The primary structure comprises 292 residues: AKT-interacting protein (292 aa).

Residues 1-11 are compositionally biased toward polar residues; the sequence is MNPFWSMSTSS. Residues 1 to 63 form a disordered region; it reads MNPFWSMSTS…TSPAPAAQST (63 aa). The segment covering 14-23 has biased composition (basic and acidic residues); sequence KRSEGEEKTL. Phosphoserine is present on serine 30. In terms of domain architecture, UBC core spans 74–222; that stretch reads YLEYSLLAEF…VVDSVKVCTA (149 aa).

It belongs to the ubiquitin-conjugating enzyme family. FTS subfamily. In terms of assembly, component of the FTS/Hook/FHIP complex (FHF complex), composed of AKTIP/FTS, FHIP1B, and one or more members of the Hook family of proteins HOOK1, HOOK2, and HOOK3. Interacts directly with HOOK1, HOOK2 and HOOK3. The FHF complex associates with the homotypic vesicular sorting complex (the HOPS complex). Also interacts with AKT1. May interact with FHIP1A.

Its subcellular location is the cytoplasm. The protein localises to the cell membrane. Component of the FTS/Hook/FHIP complex (FHF complex). The FHF complex may function to promote vesicle trafficking and/or fusion via the homotypic vesicular protein sorting complex (the HOPS complex). Regulates apoptosis by enhancing phosphorylation and activation of AKT1. Increases release of TNFSF6 via the AKT1/GSK3B/NFATC1 signaling cascade. FHF complex promotes the distribution of AP-4 complex to the perinuclear area of the cell. The chain is AKT-interacting protein from Homo sapiens (Human).